The primary structure comprises 1069 residues: Epstein-Barr nuclear antigen 6 (1069 aa).

Disordered stretches follow at residues 1–75 (MESF…RIRR), 353–708 (MLAT…PCQS), 733–776 (SSMS…LYPG), 884–932 (REPR…PPRL), and 1008–1069 (PLDI…SELD). The segment covering 50-67 (PDSRDQQSRGQRRGDENR) has biased composition (basic and acidic residues). Acidic residues-rich tracts occupy residues 381–391 (VELESSDDELP) and 507–524 (YDDD…EEET). Polar residues predominate over residues 543 to 561 (STGSAMSSSHTDPSVTQPS). A compositionally biased stretch (low complexity) spans 689–708 (QQEPSSQQQPATQSTPPCQS). Residues 742–751 (SHEEQPRYED) show a composition bias toward basic and acidic residues. Positions 1032-1048 (SQATSEAQEILSDNSEI) are enriched in polar residues.

The protein belongs to the herpesviridae EBNA-6 family. Interacts with host CTPB1; this interaction leads to gene repression, but also seems to interfere with the repressive function of CtBP pre-bound to DNA, leading to EBNA6 mediated up-regulation of many host genes. Interacts with host MYC; this interaction enhances MYC stability. Interacts (via N-terminus) with host RBPJ. Interacts (via N-terminus) with host histone H2AX; this interaction facilitates H2AX proteasomal degradation. Interacts with host TP73; this interaction inhibits TP73-mediated apoptotic pathway. Interacts (via N-terminus) with host PIM1; this interaction upregulates and stabilizes PIM1 and induces cell proliferation by inhibiting the growth suppressive properties of p21.

It is found in the host nucleus. The protein resides in the host nucleus matrix. Its function is as follows. Plays an essential role for the activation and immortalization of human B-cells. Represses transcription of viral promoters TP1 and Cp through interaction with host RBPJ, and inhibits EBNA2-mediated activation of these promoters. Targets host chromatin through interactions with host transcription factors, especially RBPJ and IRF4. Alternatively, EBNA6 also regulates the transcription of the EBV oncogene LMP1 in a cell cycle-dependent manner. Modulates the activity of several host proteins involved in cell cycle regulation including host cyclin A, MYC, RB, p21 and p27 mainly through binding to the host SCF(SKP2) complex. Inhibits the promoter of host H2AX and targets H2AX to proteasomal degradation in order to promote latency and cell proliferation. Upregulates host PIM1 expression and stabilization. Potentiates PIM1 to promote cell proliferation by inhibiting the growth suppressive properties of p21. The polypeptide is Epstein-Barr nuclear antigen 6 (EBNA6) (Epstein-Barr virus (strain AG876) (HHV-4)).